Reading from the N-terminus, the 432-residue chain is UDP-N-acetylglucosamine 1-carboxyvinyltransferase (432 aa).

22 to 23 serves as a coordination point for phosphoenolpyruvate; that stretch reads KN. R102 lines the UDP-N-acetyl-alpha-D-glucosamine pocket. Residue C126 is the Proton donor of the active site. C126 carries the post-translational modification 2-(S-cysteinyl)pyruvic acid O-phosphothioketal. Residues 131 to 135, D317, and I339 each bind UDP-N-acetyl-alpha-D-glucosamine; that span reads RPVDL.

It belongs to the EPSP synthase family. MurA subfamily.

Its subcellular location is the cytoplasm. It carries out the reaction phosphoenolpyruvate + UDP-N-acetyl-alpha-D-glucosamine = UDP-N-acetyl-3-O-(1-carboxyvinyl)-alpha-D-glucosamine + phosphate. It participates in cell wall biogenesis; peptidoglycan biosynthesis. Cell wall formation. Adds enolpyruvyl to UDP-N-acetylglucosamine. The protein is UDP-N-acetylglucosamine 1-carboxyvinyltransferase of Rhodospirillum centenum (strain ATCC 51521 / SW).